We begin with the raw amino-acid sequence, 288 residues long: Elongation factor Ts (288 aa).

The tract at residues 79-82 (TDFV) is involved in Mg(2+) ion dislocation from EF-Tu.

Belongs to the EF-Ts family.

It localises to the cytoplasm. Its function is as follows. Associates with the EF-Tu.GDP complex and induces the exchange of GDP to GTP. It remains bound to the aminoacyl-tRNA.EF-Tu.GTP complex up to the GTP hydrolysis stage on the ribosome. The chain is Elongation factor Ts from Ehrlichia ruminantium (strain Welgevonden).